Here is a 37-residue protein sequence, read N- to C-terminus: Large ribosomal subunit protein bL36 (37 aa).

This sequence belongs to the bacterial ribosomal protein bL36 family.

This Idiomarina loihiensis (strain ATCC BAA-735 / DSM 15497 / L2-TR) protein is Large ribosomal subunit protein bL36.